The chain runs to 163 residues: Thiol peroxidase (163 aa).

The Thioredoxin domain maps to 16 to 162 (LQVGDTAHDF…YDAAIAAVKN (147 aa)). The Cysteine sulfenic acid (-SOH) intermediate role is filled by Cys58. Cys58 and Cys92 are disulfide-bonded.

Belongs to the peroxiredoxin family. Tpx subfamily. As to quaternary structure, homodimer.

It carries out the reaction a hydroperoxide + [thioredoxin]-dithiol = an alcohol + [thioredoxin]-disulfide + H2O. Its function is as follows. Thiol-specific peroxidase that catalyzes the reduction of hydrogen peroxide and organic hydroperoxides to water and alcohols, respectively. Plays a role in cell protection against oxidative stress by detoxifying peroxides. The protein is Thiol peroxidase of Streptococcus gordonii.